The following is a 439-amino-acid chain: CBL-interacting protein kinase 14 (439 aa).

One can recognise a Protein kinase domain in the interval 12–267 (YELGRLLGKG…IQKIKESTWF (256 aa)). Residues 18 to 26 (LGKGTFGKV) and K41 each bind ATP. D135 serves as the catalytic Proton acceptor. Positions 153 to 182 (DFGLSALSESKRQDGLLHTTCGTPAYVAPE) are activation loop. The NAF domain maps to 298–333 (RKKNAHEDVKPMSVTNLNAFEIISFSKGFDLSGMFI). Residues 338–367 (RNEARFTSDKSASTIISKLEDVAKALNLRV) are PPI.

Belongs to the protein kinase superfamily. CAMK Ser/Thr protein kinase family. SNF1 subfamily. It depends on Mn(2+) as a cofactor.

The catalysed reaction is L-seryl-[protein] + ATP = O-phospho-L-seryl-[protein] + ADP + H(+). The enzyme catalyses L-threonyl-[protein] + ATP = O-phospho-L-threonyl-[protein] + ADP + H(+). Its function is as follows. CIPK serine-threonine protein kinases interact with CBL proteins. Binding of a CBL protein to the regulatory NAF domain of CIPK protein lead to the activation of the kinase in a calcium-dependent manner. This chain is CBL-interacting protein kinase 14 (CIPK14), found in Oryza sativa subsp. japonica (Rice).